Here is a 201-residue protein sequence, read N- to C-terminus: Adenylyl-sulfate kinase (201 aa).

Residue 35 to 42 (GLSGSGKS) coordinates ATP. Ser-109 (phosphoserine intermediate) is an active-site residue.

The protein belongs to the APS kinase family.

It carries out the reaction adenosine 5'-phosphosulfate + ATP = 3'-phosphoadenylyl sulfate + ADP + H(+). Its pathway is sulfur metabolism; hydrogen sulfide biosynthesis; sulfite from sulfate: step 2/3. Catalyzes the synthesis of activated sulfate. The protein is Adenylyl-sulfate kinase of Prochlorococcus marinus (strain SARG / CCMP1375 / SS120).